The following is a 375-amino-acid chain: tRNA-specific 2-thiouridylase MnmA (375 aa).

ATP contacts are provided by residues 18 to 25 and Met-44; that span reads GMSGGVDS. The segment at 104–106 is interaction with target base in tRNA; it reads NPD. Catalysis depends on Cys-109, which acts as the Nucleophile. Cys-109 and Cys-206 are disulfide-bonded. An ATP-binding site is contributed by Gly-134. An interaction with tRNA region spans residues 156-158; it reads KDQ. Cys-206 serves as the catalytic Cysteine persulfide intermediate. Positions 318-319 are interaction with tRNA; it reads RY.

The protein belongs to the MnmA/TRMU family.

It localises to the cytoplasm. The enzyme catalyses S-sulfanyl-L-cysteinyl-[protein] + uridine(34) in tRNA + AH2 + ATP = 2-thiouridine(34) in tRNA + L-cysteinyl-[protein] + A + AMP + diphosphate + H(+). Functionally, catalyzes the 2-thiolation of uridine at the wobble position (U34) of tRNA, leading to the formation of s(2)U34. In Colwellia psychrerythraea (strain 34H / ATCC BAA-681) (Vibrio psychroerythus), this protein is tRNA-specific 2-thiouridylase MnmA.